Here is a 336-residue protein sequence, read N- to C-terminus: MYYPFVRKALFQLDPERAHEFTFQQLRRITGTPLEALVRQKVPTKPVTCMGLTFKNPLGLAAGLDKDGECIDALGAMGFGSLEIGTVTPRPQPGNDKPRLFRLVDAEGLINRMGFNNLGVDNLVENVKKAHFDGILGINIGKNKDTPVENGKDDYLICMEKVYAYAGYIAINISSPNTPGLRTLQYGDALDDLLTAIKNKQNDLQAIHHKYVPVAVKIAPDLCEEELIQVADSLLRHNIDGVIATNTTLDRSLVQGMKNCQQTGGLSGRPLQLKSTEIIRRLSQELKGQLPIIGVGGIDSVIAAREKIAAGATLVQIYSGFIFKGPPLIEEIVTHI.

Residues 62–66 and threonine 86 contribute to the FMN site; that span reads AGLDK. Substrate is bound at residue lysine 66. 111–115 is a binding site for substrate; that stretch reads NRMGF. Asparagine 139 and asparagine 172 together coordinate FMN. Substrate is bound at residue asparagine 172. Serine 175 serves as the catalytic Nucleophile. Asparagine 177 is a substrate binding site. FMN is bound by residues lysine 217 and threonine 245. Substrate is bound at residue 246–247; the sequence is NT. Residues glycine 268, glycine 297, and 318 to 319 each bind FMN; that span reads YS.

Belongs to the dihydroorotate dehydrogenase family. Type 2 subfamily. Monomer. The cofactor is FMN.

Its subcellular location is the cell membrane. It catalyses the reaction (S)-dihydroorotate + a quinone = orotate + a quinol. It functions in the pathway pyrimidine metabolism; UMP biosynthesis via de novo pathway; orotate from (S)-dihydroorotate (quinone route): step 1/1. Functionally, catalyzes the conversion of dihydroorotate to orotate with quinone as electron acceptor. In Salmonella gallinarum (strain 287/91 / NCTC 13346), this protein is Dihydroorotate dehydrogenase (quinone).